A 446-amino-acid polypeptide reads, in one-letter code: Argininosuccinate lyase (446 aa).

This sequence belongs to the lyase 1 family. Argininosuccinate lyase subfamily.

The protein localises to the cytoplasm. The catalysed reaction is 2-(N(omega)-L-arginino)succinate = fumarate + L-arginine. It participates in amino-acid biosynthesis; L-arginine biosynthesis; L-arginine from L-ornithine and carbamoyl phosphate: step 3/3. This Bacteroides thetaiotaomicron (strain ATCC 29148 / DSM 2079 / JCM 5827 / CCUG 10774 / NCTC 10582 / VPI-5482 / E50) protein is Argininosuccinate lyase.